The following is a 334-amino-acid chain: Glycerol-3-phosphate dehydrogenase [NAD(P)+] (334 aa).

4 residues coordinate NADPH: Ser-14, Tyr-15, His-35, and Lys-109. 3 residues coordinate sn-glycerol 3-phosphate: Lys-109, Gly-138, and Thr-140. Residue Ala-142 participates in NADPH binding. Residues Lys-194, Asp-247, Ser-257, Arg-258, and Asn-259 each coordinate sn-glycerol 3-phosphate. The active-site Proton acceptor is the Lys-194. An NADPH-binding site is contributed by Arg-258. Val-282 and Glu-284 together coordinate NADPH.

Belongs to the NAD-dependent glycerol-3-phosphate dehydrogenase family.

It localises to the cytoplasm. It catalyses the reaction sn-glycerol 3-phosphate + NAD(+) = dihydroxyacetone phosphate + NADH + H(+). The enzyme catalyses sn-glycerol 3-phosphate + NADP(+) = dihydroxyacetone phosphate + NADPH + H(+). The protein operates within membrane lipid metabolism; glycerophospholipid metabolism. Its function is as follows. Catalyzes the reduction of the glycolytic intermediate dihydroxyacetone phosphate (DHAP) to sn-glycerol 3-phosphate (G3P), the key precursor for phospholipid synthesis. The protein is Glycerol-3-phosphate dehydrogenase [NAD(P)+] of Tolumonas auensis (strain DSM 9187 / NBRC 110442 / TA 4).